We begin with the raw amino-acid sequence, 792 residues long: Receptor-like protein 54 (792 aa).

The signal sequence occupies residues Met1–Ser21. At Asp22–Lys758 the chain is on the extracellular side. Residues Asn68 and Asn107 are each glycosylated (N-linked (GlcNAc...) asparagine). LRR repeat units lie at residues Gln114 to Arg137, Thr139 to Leu162, Ser163 to Leu187, Glu189 to Met209, Phe211 to Ala233, Ser235 to Leu258, Ala259 to Phe282, Lys283 to Ser302, Glu303 to Asp324, Leu325 to Leu349, Ser351 to Asn374, and Ser375 to Asn399. The N-linked (GlcNAc...) asparagine glycan is linked to Asn161. Asn230 carries N-linked (GlcNAc...) asparagine glycosylation. Residues Asn304 and Asn314 are each glycosylated (N-linked (GlcNAc...) asparagine). Asn356 and Asn374 each carry an N-linked (GlcNAc...) asparagine glycan. One copy of the LRR 13; degenerate repeat lies at Ile400 to Lys418. LRR repeat units lie at residues Arg419–Val443, Ser444–Leu470, Asp472–Cys489, and Thr490–Arg515. N-linked (GlcNAc...) asparagine glycosylation is found at Asn431, Asn442, Asn454, Asn488, and Asn503. An LRR 18; degenerate repeat occupies Leu516–Ser536. LRR repeat units follow at residues Phe539–Asn563, Asp614–Leu637, Lys638–Leu661, Lys662–Leu685, and Phe687–Gly709. N-linked (GlcNAc...) asparagine glycans are attached at residues Asn553 and Asn563. Asn647 carries N-linked (GlcNAc...) asparagine glycosylation. A glycan (N-linked (GlcNAc...) asparagine) is linked at Asn692. Residues Ala759–Ala779 form a helical membrane-spanning segment. The Cytoplasmic segment spans residues Arg780 to Leu792.

Belongs to the RLP family.

The protein resides in the cell membrane. This Arabidopsis thaliana (Mouse-ear cress) protein is Receptor-like protein 54.